The chain runs to 315 residues: MQIKLANPRGFCAGVDRAIEIVNRALEVFGPPIYVRHEVVHNKFVVEDLRSRGAIFVEELDQVPDDVIVIFSAHGVSQAVRTEAAGRGLKVFDATCPLVTKVHIEVARYSRDGRECILIGHAGHPEVEGTMGQYDASNGGAIYLVEDEEDVASLQVRNPDSLAFVTQTTLSMDDTSRVIDALRKRFPAIGGPRKDDICYATQNRQDAVKQLADECDVVLVVGSPNSSNSNRLRELAERMATPAYLIDGAEDMQQGWFEGVERIGITAGASAPEVLVRGVIQQLQAWGATGADELAGREENITFSMPKELRVKSLL.

Residue Cys-12 participates in [4Fe-4S] cluster binding. (2E)-4-hydroxy-3-methylbut-2-enyl diphosphate is bound by residues His-41 and His-74. The dimethylallyl diphosphate site is built by His-41 and His-74. Positions 41 and 74 each coordinate isopentenyl diphosphate. Cys-96 contacts [4Fe-4S] cluster. His-124 contacts (2E)-4-hydroxy-3-methylbut-2-enyl diphosphate. His-124 is a binding site for dimethylallyl diphosphate. His-124 lines the isopentenyl diphosphate pocket. The Proton donor role is filled by Glu-126. Thr-168 contributes to the (2E)-4-hydroxy-3-methylbut-2-enyl diphosphate binding site. Residue Cys-198 participates in [4Fe-4S] cluster binding. The (2E)-4-hydroxy-3-methylbut-2-enyl diphosphate site is built by Ser-226, Ser-227, Asn-228, and Ser-270. Residues Ser-226, Ser-227, Asn-228, and Ser-270 each coordinate dimethylallyl diphosphate. Isopentenyl diphosphate contacts are provided by Ser-226, Ser-227, Asn-228, and Ser-270.

This sequence belongs to the IspH family. [4Fe-4S] cluster is required as a cofactor.

It catalyses the reaction isopentenyl diphosphate + 2 oxidized [2Fe-2S]-[ferredoxin] + H2O = (2E)-4-hydroxy-3-methylbut-2-enyl diphosphate + 2 reduced [2Fe-2S]-[ferredoxin] + 2 H(+). It carries out the reaction dimethylallyl diphosphate + 2 oxidized [2Fe-2S]-[ferredoxin] + H2O = (2E)-4-hydroxy-3-methylbut-2-enyl diphosphate + 2 reduced [2Fe-2S]-[ferredoxin] + 2 H(+). It participates in isoprenoid biosynthesis; dimethylallyl diphosphate biosynthesis; dimethylallyl diphosphate from (2E)-4-hydroxy-3-methylbutenyl diphosphate: step 1/1. Its pathway is isoprenoid biosynthesis; isopentenyl diphosphate biosynthesis via DXP pathway; isopentenyl diphosphate from 1-deoxy-D-xylulose 5-phosphate: step 6/6. Its function is as follows. Catalyzes the conversion of 1-hydroxy-2-methyl-2-(E)-butenyl 4-diphosphate (HMBPP) into a mixture of isopentenyl diphosphate (IPP) and dimethylallyl diphosphate (DMAPP). Acts in the terminal step of the DOXP/MEP pathway for isoprenoid precursor biosynthesis. The protein is 4-hydroxy-3-methylbut-2-enyl diphosphate reductase of Pseudomonas savastanoi pv. phaseolicola (strain 1448A / Race 6) (Pseudomonas syringae pv. phaseolicola (strain 1448A / Race 6)).